A 538-amino-acid polypeptide reads, in one-letter code: Cytochrome P450 52-M1 (538 aa).

A helical membrane pass occupies residues 18 to 38 (GLLPLLFVAFLVLHEPIWLLW). A heme-binding site is contributed by cysteine 484.

It belongs to the cytochrome P450 family. It depends on heme as a cofactor.

It is found in the membrane. It catalyses the reaction an omega-methyl-long-chain fatty acid + reduced [NADPH--hemoprotein reductase] + O2 = an omega-hydroxy-long-chain fatty acid + oxidized [NADPH--hemoprotein reductase] + H2O + H(+). The enzyme catalyses an (omega-1)-ethyl fatty acid + reduced [NADPH--hemoprotein reductase] + O2 = an (omega-1)-hydroxy-long-chain fatty acid + oxidized [NADPH--hemoprotein reductase] + H2O + H(+). The catalysed reaction is (9Z)-octadecenoate + reduced [NADPH--hemoprotein reductase] + O2 = 18-hydroxy-(9Z)-octadecenoate + oxidized [NADPH--hemoprotein reductase] + H2O + H(+). It carries out the reaction (9Z)-octadecenoate + reduced [NADPH--hemoprotein reductase] + O2 = 17-hydroxy-(9Z)-octadecenoate + oxidized [NADPH--hemoprotein reductase] + H2O + H(+). It catalyses the reaction (9Z,12Z)-octadecadienoate + reduced [NADPH--hemoprotein reductase] + O2 = 18-hydroxy-(9Z,12Z)-octadecadienoate + oxidized [NADPH--hemoprotein reductase] + H2O + H(+). The enzyme catalyses (9Z,12Z)-octadecadienoate + reduced [NADPH--hemoprotein reductase] + O2 = 17-hydroxy-(9Z,12Z)-octadecadienoate + oxidized [NADPH--hemoprotein reductase] + H2O + H(+). The catalysed reaction is hexadecanoate + reduced [NADPH--hemoprotein reductase] + O2 = 16-hydroxyhexadecanoate + oxidized [NADPH--hemoprotein reductase] + H2O + H(+). It carries out the reaction (9Z)-hexadecenoate + reduced [NADPH--hemoprotein reductase] + O2 = (9Z)-16-hydroxyhexadec-9-enoate + oxidized [NADPH--hemoprotein reductase] + H2O + H(+). It catalyses the reaction octadecanoate + reduced [NADPH--hemoprotein reductase] + O2 = 18-hydroxyoctadecanoate + oxidized [NADPH--hemoprotein reductase] + H2O + H(+). Catalyzes the first step of sophorolipid biosynthesis. Catalyzes the terminal (at the omega-position) or subterminal (at the omega(-1)-position) hydroxylation of a fatty acid. This converts the fatty acid to a substrate for the subsequent glycosyltransferase reactions. Oleic acid is the preferred substrate, but it acts on various other C-16, C-18 and C-20 saturated and unsaturated fatty acids, namely palmitic, palmitoleic, stearic, linoleic, cis-9,10-epoxystearic, trans-9,10-epoxystearic and arachidonic acid. This chain is Cytochrome P450 52-M1, found in Starmerella bombicola (Yeast).